A 261-amino-acid polypeptide reads, in one-letter code: Protein STAY-GREEN, chloroplastic (261 aa).

A chloroplast-targeting transit peptide spans 1–54 (MDTLTSAPLLTTKFKPSFSPQQKPCFPHRRRFENGKKNQSIVPVARLFGPAIFE).

The protein belongs to the staygreen family.

The protein localises to the plastid. It is found in the chloroplast. In terms of biological role, probably involved in the disassembling mechanism of the intact light-harvesting complex of photosystem II (LHCII) in the thylakoid membranes. Required for the chlorophyll breakdown pathway. Acts independent and upstream of pheophorbide a oxygenase (PAO). The chain is Protein STAY-GREEN, chloroplastic (SGR) from Pisum sativum (Garden pea).